A 498-amino-acid polypeptide reads, in one-letter code: Glutamyl-tRNA(Gln) amidotransferase subunit A (498 aa).

Catalysis depends on charge relay system residues Lys-80 and Ser-155. Positions 132 to 159 (SSTENSAYGPTRNPWDTDRVPGGSSGGS) are disordered. Residue Ser-179 is the Acyl-ester intermediate of the active site.

It belongs to the amidase family. GatA subfamily. As to quaternary structure, heterotrimer of A, B and C subunits.

The enzyme catalyses L-glutamyl-tRNA(Gln) + L-glutamine + ATP + H2O = L-glutaminyl-tRNA(Gln) + L-glutamate + ADP + phosphate + H(+). Allows the formation of correctly charged Gln-tRNA(Gln) through the transamidation of misacylated Glu-tRNA(Gln) in organisms which lack glutaminyl-tRNA synthetase. The reaction takes place in the presence of glutamine and ATP through an activated gamma-phospho-Glu-tRNA(Gln). This chain is Glutamyl-tRNA(Gln) amidotransferase subunit A, found in Thermobifida fusca (strain YX).